Consider the following 368-residue polypeptide: Histidinol-phosphate aminotransferase (368 aa).

N6-(pyridoxal phosphate)lysine is present on Lys228.

It belongs to the class-II pyridoxal-phosphate-dependent aminotransferase family. Histidinol-phosphate aminotransferase subfamily. As to quaternary structure, homodimer. Requires pyridoxal 5'-phosphate as cofactor.

It carries out the reaction L-histidinol phosphate + 2-oxoglutarate = 3-(imidazol-4-yl)-2-oxopropyl phosphate + L-glutamate. Its pathway is amino-acid biosynthesis; L-histidine biosynthesis; L-histidine from 5-phospho-alpha-D-ribose 1-diphosphate: step 7/9. This is Histidinol-phosphate aminotransferase (hisC) from Methylobacillus flagellatus.